A 217-amino-acid chain; its full sequence is TLD domain-containing protein 2 (217 aa).

The interval 1-48 (MKSLRWRYTRLPSQVEDALSGEEDKEEEEEKEEETTPAPTPVPEHPMV) is disordered. A compositionally biased stretch (acidic residues) spans 19-35 (LSGEEDKEEEEEKEEET). One can recognise a TLDc domain in the interval 56 to 217 (QVLGASEMSQ…ISELEAWVLS (162 aa)).

This sequence belongs to the OXR1 family.

This is TLD domain-containing protein 2 (TLDC2) from Bos taurus (Bovine).